A 424-amino-acid chain; its full sequence is MKKVIITPSKLKGSVKIPPSKSMAHRAIICASLSKGESVISNIDFSEDIIATMEGMKSLGANIKVEKDKLIINGENILKDSNYKVIDCNESGSTLRFLVPISLIKDNRVNFIGRGNLGKRPLKTYYEIFEEQEVKYSYEEENLDLNIEGSLKGGEFKVKGNISSQFISGLLFTLPLLKEDSKIIITTELESKGYIDLTLDMIEKFGVTIKNNNYREFLIKGNQSYKPMNYKVEGDYSQAAFYFSAGALGSEINCLDLDLSSYQGDKECIEILEGMGARLIENQEESLSIIHGDLNGTIIDASQCPDIIPVLTVVAALSKGETRIINGERLRIKECDRLNAICTELNKLGADIKELKDGLIIKGVKELIGGEVYSHKDHRIAMSLAIASTRCKEEVIIKEPDCVKKSYPGFWEDFKSLGGILKGE.

Residues Lys21, Ser22, and Arg26 each coordinate 3-phosphoshikimate. Residue Lys21 coordinates phosphoenolpyruvate. The phosphoenolpyruvate site is built by Gly92 and Arg120. 3-phosphoshikimate contacts are provided by Ser163, Ser164, Gln165, Ser191, Asp306, and Lys333. A phosphoenolpyruvate-binding site is contributed by Gln165. Residue Asp306 is the Proton acceptor of the active site. Positions 337, 379, and 405 each coordinate phosphoenolpyruvate.

The protein belongs to the EPSP synthase family. As to quaternary structure, monomer.

The protein localises to the cytoplasm. The enzyme catalyses 3-phosphoshikimate + phosphoenolpyruvate = 5-O-(1-carboxyvinyl)-3-phosphoshikimate + phosphate. Its pathway is metabolic intermediate biosynthesis; chorismate biosynthesis; chorismate from D-erythrose 4-phosphate and phosphoenolpyruvate: step 6/7. Catalyzes the transfer of the enolpyruvyl moiety of phosphoenolpyruvate (PEP) to the 5-hydroxyl of shikimate-3-phosphate (S3P) to produce enolpyruvyl shikimate-3-phosphate and inorganic phosphate. The polypeptide is 3-phosphoshikimate 1-carboxyvinyltransferase (Clostridium perfringens (strain ATCC 13124 / DSM 756 / JCM 1290 / NCIMB 6125 / NCTC 8237 / Type A)).